The sequence spans 252 residues: Mediator of RNA polymerase II transcription subunit 4 (252 aa).

Residues 70–112 are a coiled coil; sequence KIHQEMQVLEKEVEKRDSDIQQLQKQLKEAEHILATAVYQAKE. The segment at 218 to 252 is disordered; it reads HSNEFLMESLGPNKENEEDVEVMSTDSSSSSSDSD. Residues 241–252 are compositionally biased toward low complexity; sequence STDSSSSSSDSD.

The protein belongs to the Mediator complex subunit 4 family. As to quaternary structure, component of the Mediator complex.

It localises to the nucleus. Functionally, component of the Mediator complex, a coactivator involved in the regulated transcription of nearly all RNA polymerase II-dependent genes. Mediator functions as a bridge to convey information from gene-specific regulatory proteins to the basal RNA polymerase II transcription machinery. Mediator is recruited to promoters by direct interactions with regulatory proteins and serves as a scaffold for the assembly of a functional preinitiation complex with RNA polymerase II and the general transcription factors. The protein is Mediator of RNA polymerase II transcription subunit 4 (med4) of Xenopus tropicalis (Western clawed frog).